Consider the following 398-residue polypeptide: MTITSTNIIEETNYYGAHNYHPLPIVVSEANGVWVKDPEGNSYMDMLSAYSAVNQGHRHPKIIEALKNQADKVTLTSRAFHNELLGPWTKRMAKLTKKDKVLPMNTGVEAVETAIKAARRWAYQVKGVTENQAEIIAADGNFHGRTLNAISLSNDPDATKNYGPFVPGINKVSYGDINAIEKAITENTAAIILEPIQGEAGIIIPPEGYLKKVRELCSEKNILFIADEVQTGFARTGKMFACEWENVEPDIYVMGKALGGGVFPVSAIAANNEIMDVFTPGSHGSTFGGNPLACAVSMAAIDVIEEENLVNKSLESGKYFADKLRAVNFEGIKEVRARGLFIGMEFHQPVREICEKLKDKGILCKETHVNTIRFAPPLVITKDEMDWAIQRIEEVLTN.

Lys-256 is modified (N6-(pyridoxal phosphate)lysine).

The protein belongs to the class-III pyridoxal-phosphate-dependent aminotransferase family. OAT subfamily. The cofactor is pyridoxal 5'-phosphate.

It localises to the cytoplasm. It carries out the reaction a 2-oxocarboxylate + L-ornithine = L-glutamate 5-semialdehyde + an L-alpha-amino acid. It functions in the pathway amino-acid biosynthesis; L-proline biosynthesis; L-glutamate 5-semialdehyde from L-ornithine: step 1/1. Its function is as follows. Catalyzes the interconversion of ornithine to glutamate semialdehyde. This chain is Ornithine aminotransferase, found in Oceanobacillus iheyensis (strain DSM 14371 / CIP 107618 / JCM 11309 / KCTC 3954 / HTE831).